Here is a 287-residue protein sequence, read N- to C-terminus: Undecaprenyl-diphosphatase (287 aa).

A run of 7 helical transmembrane segments spans residues 6-26, 45-65, 89-109, 111-131, 204-224, 238-258, and 266-286; these read LHLL…FIPV, SGKV…MWIF, NLLL…KSIK, VFYH…IMLW, ATEF…VYDL, AIAV…RAVL, and YRVF…WIYA.

This sequence belongs to the UppP family.

The protein localises to the cell inner membrane. The enzyme catalyses di-trans,octa-cis-undecaprenyl diphosphate + H2O = di-trans,octa-cis-undecaprenyl phosphate + phosphate + H(+). Catalyzes the dephosphorylation of undecaprenyl diphosphate (UPP). Confers resistance to bacitracin. In Bordetella bronchiseptica (strain ATCC BAA-588 / NCTC 13252 / RB50) (Alcaligenes bronchisepticus), this protein is Undecaprenyl-diphosphatase.